The primary structure comprises 282 residues: MKVIHTIKDLQAELSVLKAQGKKVGLVPTMGALHAGHASLVKRSVNENEVTVVSVFVNPTQFNDKNDLVKYPRTLDADCKLLEACGATYAFAPSVEEMYPEPDTRQFSYAPLDTVMEGAFRPGHFNGVCQIVSKLFEAVKPHRAYFGEKDFQQLAIIREMVRQMQFDLEIVGCPIVREEDGLALSSRNARLSAEERENALKISQTLFKSRTFAATHTVSETLKFVEDAIAAVPGLRLEYFEIVDGNTLQKVDNWNQTSYVVGCITVFCGDVRLIDNIKYKES.

Met-30–His-37 lines the ATP pocket. His-37 serves as the catalytic Proton donor. Residue Gln-61 participates in (R)-pantoate binding. Gln-61 is a beta-alanine binding site. Gly-147–Asp-150 lines the ATP pocket. Gln-153 contacts (R)-pantoate. ATP is bound by residues Val-176 and Leu-184–Arg-187.

The protein belongs to the pantothenate synthetase family. In terms of assembly, homodimer.

The protein resides in the cytoplasm. It carries out the reaction (R)-pantoate + beta-alanine + ATP = (R)-pantothenate + AMP + diphosphate + H(+). Its pathway is cofactor biosynthesis; (R)-pantothenate biosynthesis; (R)-pantothenate from (R)-pantoate and beta-alanine: step 1/1. Functionally, catalyzes the condensation of pantoate with beta-alanine in an ATP-dependent reaction via a pantoyl-adenylate intermediate. In Bacteroides fragilis (strain ATCC 25285 / DSM 2151 / CCUG 4856 / JCM 11019 / LMG 10263 / NCTC 9343 / Onslow / VPI 2553 / EN-2), this protein is Pantothenate synthetase.